A 65-amino-acid polypeptide reads, in one-letter code: uncharacterized protein (65 aa).

Residues 1-22 form the signal peptide; it reads MKFIKLFTFLVYLFVTLTNVFA.

This is an uncharacterized protein from Invertebrate iridescent virus 6 (IIV-6).